Reading from the N-terminus, the 318-residue chain is Olfactory receptor 2T34 (318 aa).

Over 1–30 (MCSGNQTSQNQTASTDFTLTGLFAESKHAA) the chain is Extracellular. N-linked (GlcNAc...) asparagine glycans are attached at residues Asn5 and Asn10. Residues 31–54 (LLYTVTFLLFLMALTGNALLILLI) traverse the membrane as a helical segment. The Cytoplasmic segment spans residues 55-62 (HSEPRLHT). Residues 63–84 (PMYFFISQLALMDLMYLCVTVP) form a helical membrane-spanning segment. Residues 85-105 (KMLVGQVTGDDTISPSGCGIQ) lie on the Extracellular side of the membrane. Cys102 and Cys194 are joined by a disulfide. Residues 106 to 125 (MFFHLTLAGAEVFLLAAMAY) form a helical membrane-spanning segment. Topologically, residues 126–144 (DRYAAVCRPLHYPLLMNQR) are cytoplasmic. The chain crosses the membrane as a helical span at residues 145–163 (VCQLLVSACWVLGMVDGLL). Residues 164 to 200 (LTPITMSFPFCQSRKILSFFCETPALLKLSCSDVSLY) lie on the Extracellular side of the membrane. A helical transmembrane segment spans residues 201 to 224 (KMLTYLCCILMLLTPIMVISSSYT). The Cytoplasmic segment spans residues 225 to 241 (LILHLIHRMNSAAGRRK). A helical membrane pass occupies residues 242 to 264 (ALATCSSHMIIVLLLFGASFYTY). Topologically, residues 265–277 (MLRSSYHTAEQDM) are extracellular. Residues 278-297 (MVSAFYTIFTPVLNPLIYSL) form a helical membrane-spanning segment. The Cytoplasmic portion of the chain corresponds to 298–318 (RNKDVTRALRSMMQSRMNQEK).

Belongs to the G-protein coupled receptor 1 family.

The protein resides in the cell membrane. Functionally, odorant receptor. The sequence is that of Olfactory receptor 2T34 (OR2T34) from Homo sapiens (Human).